We begin with the raw amino-acid sequence, 533 residues long: Lysophosphatidylcholine acyltransferase (533 aa).

Topologically, residues Met1–Arg79 are cytoplasmic. Residues Val80–Gly100 form a helical; Signal-anchor for type II membrane protein membrane-spanning segment. At Met101–Asn533 the chain is on the lumenal side. An HXXXXD motif motif is present at residues His158–Asp163. EF-hand domains follow at residues Leu402–Lys437, Ser439–Lys474, and Leu475–Ser510.

Belongs to the 1-acyl-sn-glycerol-3-phosphate acyltransferase family.

Its subcellular location is the endoplasmic reticulum membrane. It is found in the golgi apparatus membrane. It localises to the lipid droplet. It catalyses the reaction a 1-acyl-sn-glycero-3-phosphocholine + an acyl-CoA = a 1,2-diacyl-sn-glycero-3-phosphocholine + CoA. Its pathway is lipid metabolism; phospholipid metabolism. Functionally, acetyltransferase which mediates the conversion of 1-acyl-sn-glycero-3-phosphocholine (LPC) into phosphatidylcholine (PC). Has a calcium-independent activity. Displays a clear preference for saturated fatty acyl-CoAs, and 1-myristoyl or 1-palmitoyl LPC as acyl donors and acceptors, respectively. Involved in the regulation of lipid droplet number and size. This chain is Lysophosphatidylcholine acyltransferase, found in Drosophila melanogaster (Fruit fly).